Here is a 130-residue protein sequence, read N- to C-terminus: Small ribosomal subunit protein uS9 (130 aa).

Belongs to the universal ribosomal protein uS9 family.

The polypeptide is Small ribosomal subunit protein uS9 (Vibrio vulnificus (strain CMCP6)).